Consider the following 412-residue polypeptide: 8-amino-7-oxononanoate synthase (412 aa).

Arg-28 is a binding site for substrate. Residue 115 to 116 coordinates pyridoxal 5'-phosphate; that stretch reads GY. Residue His-140 coordinates substrate. Positions 186, 214, and 246 each coordinate pyridoxal 5'-phosphate. Lys-249 is subject to N6-(pyridoxal phosphate)lysine. Thr-367 lines the substrate pocket.

This sequence belongs to the class-II pyridoxal-phosphate-dependent aminotransferase family. BioF subfamily. In terms of assembly, homodimer. It depends on pyridoxal 5'-phosphate as a cofactor.

It carries out the reaction 6-carboxyhexanoyl-[ACP] + L-alanine + H(+) = (8S)-8-amino-7-oxononanoate + holo-[ACP] + CO2. The protein operates within cofactor biosynthesis; biotin biosynthesis. In terms of biological role, catalyzes the decarboxylative condensation of pimeloyl-[acyl-carrier protein] and L-alanine to produce 8-amino-7-oxononanoate (AON), [acyl-carrier protein], and carbon dioxide. In Paracidovorax citrulli (strain AAC00-1) (Acidovorax citrulli), this protein is 8-amino-7-oxononanoate synthase.